The sequence spans 230 residues: Fibrillarin-like rRNA/tRNA 2'-O-methyltransferase (230 aa).

S-adenosyl-L-methionine is bound by residues 87–88, 105–106, 130–131, and 150–153; these read TT, EF, DA, and DVAQ.

It belongs to the methyltransferase superfamily. Fibrillarin family. In terms of assembly, interacts with nop5. Component of box C/D small ribonucleoprotein (sRNP) particles that contain rpl7ae, FlpA and nop5, plus a guide RNA.

In terms of biological role, involved in pre-rRNA and tRNA processing. Utilizes the methyl donor S-adenosyl-L-methionine to catalyze the site-specific 2'-hydroxyl methylation of ribose moieties in rRNA and tRNA. Site specificity is provided by a guide RNA that base pairs with the substrate. Methylation occurs at a characteristic distance from the sequence involved in base pairing with the guide RNA. The polypeptide is Fibrillarin-like rRNA/tRNA 2'-O-methyltransferase (Methanococcus maripaludis (strain DSM 14266 / JCM 13030 / NBRC 101832 / S2 / LL)).